Consider the following 197-residue polypeptide: Peptide deformylase (197 aa).

Residues Cys-106 and His-148 each contribute to the Fe cation site. The active site involves Glu-149. Residue His-152 coordinates Fe cation.

Belongs to the polypeptide deformylase family. Fe(2+) is required as a cofactor.

The enzyme catalyses N-terminal N-formyl-L-methionyl-[peptide] + H2O = N-terminal L-methionyl-[peptide] + formate. Removes the formyl group from the N-terminal Met of newly synthesized proteins. Requires at least a dipeptide for an efficient rate of reaction. N-terminal L-methionine is a prerequisite for activity but the enzyme has broad specificity at other positions. The polypeptide is Peptide deformylase (Mycolicibacterium smegmatis (strain ATCC 700084 / mc(2)155) (Mycobacterium smegmatis)).